A 298-amino-acid chain; its full sequence is Inosose dehydratase (298 aa).

It belongs to the IolE/MocC family. Requires glutathione as cofactor. Co(2+) serves as cofactor. Mn(2+) is required as a cofactor.

The catalysed reaction is scyllo-inosose = 3D-3,5/4-trihydroxycyclohexane-1,2-dione + H2O. It participates in polyol metabolism; myo-inositol degradation into acetyl-CoA; acetyl-CoA from myo-inositol: step 2/7. Catalyzes the dehydration of inosose (2-keto-myo-inositol, 2KMI or 2,4,6/3,5-pentahydroxycyclohexanone) to 3D-(3,5/4)-trihydroxycyclohexane-1,2-dione (D-2,3-diketo-4-deoxy-epi-inositol). In Geobacillus thermodenitrificans (strain NG80-2), this protein is Inosose dehydratase.